We begin with the raw amino-acid sequence, 862 residues long: Axin-1 (862 aa).

The tract at residues 1–78 is disordered; sequence MNIQEQGFPL…GYEPEGSASP (78 aa). The short motif at 20 to 29 is the Tankyrase-binding motif element; the sequence is APRPPVPGEE. Phosphoserine; by CK1 occurs at positions 75 and 77. Residues 88–211 enclose the RGS domain; it reads SLHSLLDDQD…LKSDIYLEYT (124 aa). The tract at residues 209 to 338 is interaction with TP53; the sequence is EYTRTGSESP…DADTLSLTDS (130 aa). Disordered stretches follow at residues 215–289 and 316–344; these read SESP…YSEG and TSANDSEQQSLSSDADTLSLTDSSVDGIP. Ser-217 is subject to Phosphoserine; by CK1. The segment covering 242–258 has biased composition (acidic residues); that stretch reads NEDEEWKCDQDMDEDDG. Over residues 325-339 the composition is skewed to low complexity; sequence SLSSDADTLSLTDSS. The interaction with GSK3B stretch occupies residues 348-433; it reads IRKQHRREMQ…DGDPSSGPPG (86 aa). Positions 353 to 411 are interaction with SIAH1 and SIAH2; sequence RREMQESVQVNGRVPLPHIPRTYRVPKEVRVEPQKFAEELIHRLEAVQRTREAEEKLEE. Positions 413–441 are disordered; the sequence is LKRVRMEEEGEDGDPSSGPPGPCHKLPPA. A compositionally biased stretch (pro residues) spans 429 to 441; the sequence is SGPPGPCHKLPPA. An interaction with CTNNB1 region spans residues 434-502; sequence PCHKLPPAPA…SPDSGHVAKM (69 aa). Ser-469 carries the phosphoserine; by CK1 modification. The interval 480–500 is disordered; sequence RTPGRQSPGPGHRSPDSGHVA. Phosphothreonine; by GSK3-beta is present on Thr-481. Ser-486, Ser-493, and Ser-511 each carry phosphoserine. Positions 507-757 are interaction with RNF111; that stretch reads GGAASGHGKH…PVLHVVPAVS (251 aa). Basic residues predominate over residues 531–544; sequence HHRHVHHHVHHSTA. Disordered stretches follow at residues 531 to 629 and 641 to 679; these read HHRH…AEKN and KEISRHRRTGHGSSGTRKPQPHENSRPLSLEHPWAGPQL. Over residues 545-556 the composition is skewed to basic and acidic residues; the sequence is RPKEQVEAEATR. An interaction with PPP2CA region spans residues 575 to 789; the sequence is SRGYSESVGA…CDSIVVAYYF (215 aa). Ser-581 is modified (phosphoserine). Residues 677-752 are interaction with HIPK2; that stretch reads PQLRTSVQPS…RPACAPVLHV (76 aa). Residues 780-862 enclose the DIX domain; the sequence is CDSIVVAYYF…KIIGKVEKVD (83 aa). Glycyl lysine isopeptide (Lys-Gly) (interchain with G-Cter in SUMO) cross-links involve residues Lys-857 and Lys-860.

As to quaternary structure, homodimer. Interacts with ZBED3; the interaction is direct, enhanced by protein kinase GSK3B and casein kinase CSNK1E activities and decreases GSK3B-induced beta-catenin serine and threonine phosphorylations. Component of the beta-catenin destruction complex, containing at least, CTNNB1, an axin and GSK3B, that regulates CTNNB1 protein levels through phosphorylation and ubiquitination. Interacts with CTNNB1 (via the armadillo repeats 2-7). Interacts with GSK3B; the interaction hyperphosphorylates CTNNB1 leading to its ubiquitination and destruction. Component of the AXIN1-HIPK2-TP53 complex. Interacts directly in the complex with TP53 and HIPK2. Interacts with DAXX; the interaction stimulates the interaction of DAXX with TP53, stimulates 'Ser-46' phosphorylation of TP53 and induces cell death on UV irradiation. Also binds APC, SMAD6, SMAD7 and RNF111. Interacts with DIXDC1; prevents interaction with MAP3K1. Interacts with MAP3K4. Interacts with ANKRD6 and AIDA. Interacts with MDFI; the interaction decreases AXIN1-mediated JUN N-terminal kinase (JNK) activation. Interacts with MDFIC; the interaction inhibits beta-cateninin-mediated signaling and AXIN1-mediated JUN N-terminal kinase (JNK) activation. Interacts with LRP5 (via its phosphorylated PPPSP motifs); the interaction is stimulated by WNT1 and GSK3B and activates beta-catenin signaling. Interacts (via the C-terminal) with PPP1CA; the interaction dephosphorylates AXIN1 and regulates interaction with GSK3B. Interacts with PPP2CA; the interaction dephosphorylates AXIN1. Interacts with MACF1. Found in a complex composed of MACF1, APC, AXIN1, CTNNB1 and GSK3B. Interacts with TNKS. Interacts with DAB2; the interaction is mutually exclusive with the AXIN1:PPP1CA interaction. Interacts with WDR26. Interacts with GID8. Interacts with SIAH1 and SIAH2; both probably catalyze AXIN1 ubiquitination and subsequent proteasome-mediated ubiquitin-dependent degradation. Interaction with GSK3B and AXIN1 is competitive. In terms of processing, phosphorylation and dephosphorylation of AXIN1 regulates assembly and function of the beta-catenin complex. Phosphorylated by CK1 and GSK3B. Dephosphorylated by PPP1CA and PPP2CA. Phosphorylation by CK1 enhances binding of GSK3B to AXIN1. ADP-ribosylated by tankyrase TNKS and TNKS2. Poly-ADP-ribosylated protein is recognized by RNF146, followed by ubiquitination at 'Lys-48' and subsequent activation of the Wnt signaling pathway. Post-translationally, ubiquitinated by RNF146 when poly-ADP-ribosylated, leading to its degradation and subsequent activation of the Wnt signaling pathway. Sumoylation at Lys-857 and Lys-860 prevents ubiquitination and degradation. Sumoylation is required for AXIN1-mediated JNK activation. Deubiquitinated by USP34, deubiquitinated downstream of beta-catenin stabilization step: deubiquitination is important for nuclear accumulation during Wnt signaling to positively regulate beta-catenin (CTNBB1)-mediated transcription. Ubiquitination by SIAH1 and SIAH2 induces its proteasomal degradation as part of the activation of the Wnt signaling pathway. In terms of tissue distribution, ubiquitously expressed.

It is found in the cytoplasm. Its subcellular location is the nucleus. The protein localises to the membrane. The protein resides in the cell membrane. Functionally, component of the beta-catenin destruction complex required for regulating CTNNB1 levels through phosphorylation and ubiquitination, and modulating Wnt-signaling. Controls dorsoventral patterning via two opposing effects; down-regulates CTNNB1 to inhibit the Wnt signaling pathway and ventralize embryos, but also dorsalizes embryos by activating a Wnt-independent JNK signaling pathway. In Wnt signaling, probably facilitates the phosphorylation of CTNNB1 and APC by GSK3B. Likely to function as a tumor suppressor. Enhances TGF-beta signaling by recruiting the RNF111 E3 ubiquitin ligase and promoting the degradation of inhibitory SMAD7. Also a component of the AXIN1-HIPK2-TP53 complex which controls cell growth, apoptosis and development. Facilitates the phosphorylation of TP53 by HIPK2 upon ultraviolet irradiation. This Homo sapiens (Human) protein is Axin-1 (AXIN1).